A 681-amino-acid chain; its full sequence is Pseudohemocyanin-2 (681 aa).

The N-terminal stretch at Val1–Arg21 is a signal peptide. Residues Asn98, Asn191, Asn228, and Asn624 are each glycosylated (N-linked (GlcNAc...) asparagine).

This sequence belongs to the tyrosinase family. Hemocyanin subfamily. As to quaternary structure, hexamer. In terms of tissue distribution, strongly expressed in ovaries. Also expressed in heart. Not detected in hepatopancreas, gills, connective tissue or muscle.

Its function is as follows. Does not function as a hemocyanin. This chain is Pseudohemocyanin-2, found in Homarus americanus (American lobster).